Here is a 387-residue protein sequence, read N- to C-terminus: Protein kinase ORF16 (387 aa).

Residues 82–381 (KKILSRVGPE…VTLMTELSLL (300 aa)) form the Protein kinase domain. Residue K122 participates in ATP binding. D226 (proton acceptor) is an active-site residue.

The protein belongs to the protein kinase superfamily. Ser/Thr protein kinase family.

It catalyses the reaction L-seryl-[protein] + ATP = O-phospho-L-seryl-[protein] + ADP + H(+). The enzyme catalyses L-threonyl-[protein] + ATP = O-phospho-L-threonyl-[protein] + ADP + H(+). This is Protein kinase ORF16 (ORF16) from Ictalurid herpesvirus 1 (strain Auburn) (IcHV-1).